We begin with the raw amino-acid sequence, 261 residues long: Ribosomal RNA small subunit methyltransferase J (261 aa).

S-adenosyl-L-methionine is bound by residues Arg109–Asp110, Glu125–Arg126, and Asp179.

The protein belongs to the methyltransferase superfamily. RsmJ family.

The protein resides in the cytoplasm. It catalyses the reaction guanosine(1516) in 16S rRNA + S-adenosyl-L-methionine = N(2)-methylguanosine(1516) in 16S rRNA + S-adenosyl-L-homocysteine + H(+). In terms of biological role, specifically methylates the guanosine in position 1516 of 16S rRNA. The chain is Ribosomal RNA small subunit methyltransferase J from Pseudomonas aeruginosa (strain ATCC 15692 / DSM 22644 / CIP 104116 / JCM 14847 / LMG 12228 / 1C / PRS 101 / PAO1).